The chain runs to 343 residues: Protein RecA (343 aa).

Residue 64-71 (GPESSGKT) participates in ATP binding.

It belongs to the RecA family.

It is found in the cytoplasm. Can catalyze the hydrolysis of ATP in the presence of single-stranded DNA, the ATP-dependent uptake of single-stranded DNA by duplex DNA, and the ATP-dependent hybridization of homologous single-stranded DNAs. It interacts with LexA causing its activation and leading to its autocatalytic cleavage. The chain is Protein RecA from Cereibacter sphaeroides (strain ATCC 17023 / DSM 158 / JCM 6121 / CCUG 31486 / LMG 2827 / NBRC 12203 / NCIMB 8253 / ATH 2.4.1.) (Rhodobacter sphaeroides).